Here is a 314-residue protein sequence, read N- to C-terminus: Carbamate kinase (314 aa).

It belongs to the carbamate kinase family. In terms of assembly, homodimer.

It is found in the cytoplasm. It catalyses the reaction hydrogencarbonate + NH4(+) + ATP = carbamoyl phosphate + ADP + H2O + H(+). The polypeptide is Carbamate kinase (cpkA) (Pyrococcus horikoshii (strain ATCC 700860 / DSM 12428 / JCM 9974 / NBRC 100139 / OT-3)).